Consider the following 106-residue polypeptide: Large ribosomal subunit protein P1B (106 aa).

Position 2 is an N-acetylserine (S2). A compositionally biased stretch (low complexity) spans 69–82 (AGAASGAAAAGGDA). Positions 69-106 (AGAASGAAAAGGDAAAEEEKEEEAAEESDDDMGFGLFD) are disordered. The span at 83-100 (AAEEEKEEEAAEESDDDM) shows a compositional bias: acidic residues. S96 carries the phosphoserine modification.

This sequence belongs to the eukaryotic ribosomal protein P1/P2 family. In terms of assembly, component of the large ribosomal subunit (LSU). Mature yeast ribosomes consist of a small (40S) and a large (60S) subunit. The 40S small subunit contains 1 molecule of ribosomal RNA (18S rRNA) and 33 different proteins (encoded by 57 genes). The large 60S subunit contains 3 rRNA molecules (25S, 5.8S and 5S rRNA) and 46 different proteins (encoded by 81 genes). The 5 acidic ribosomal P-proteins form the stalk structure of the 60S subunit. They are organized as a pentameric complex in which uL10/P0 interacts with 2 heterodimers, P1A-P2B and P1B-P2A.

The protein resides in the cytoplasm. In terms of biological role, component of the ribosome, a large ribonucleoprotein complex responsible for the synthesis of proteins in the cell. The small ribosomal subunit (SSU) binds messenger RNAs (mRNAs) and translates the encoded message by selecting cognate aminoacyl-transfer RNA (tRNA) molecules. The large subunit (LSU) contains the ribosomal catalytic site termed the peptidyl transferase center (PTC), which catalyzes the formation of peptide bonds, thereby polymerizing the amino acids delivered by tRNAs into a polypeptide chain. The nascent polypeptides leave the ribosome through a tunnel in the LSU and interact with protein factors that function in enzymatic processing, targeting, and the membrane insertion of nascent chains at the exit of the ribosomal tunnel. The polypeptide is Large ribosomal subunit protein P1B (Saccharomyces cerevisiae (strain ATCC 204508 / S288c) (Baker's yeast)).